A 360-amino-acid polypeptide reads, in one-letter code: Dihydroorotate dehydrogenase (quinone) (360 aa).

FMN-binding positions include 60–64 and Thr-84; that span reads AGFDK. Lys-64 lines the substrate pocket. A substrate-binding site is contributed by 109-113; it reads NRMGF. Residues Asn-137 and Asn-168 each coordinate FMN. Asn-168 is a binding site for substrate. Ser-171 serves as the catalytic Nucleophile. Position 173 (Asn-173) interacts with substrate. FMN is bound by residues Lys-213 and Ser-241. Substrate is bound at residue 242-243; that stretch reads NT. FMN is bound by residues Gly-264, Gly-293, and 314 to 315; that span reads YS.

This sequence belongs to the dihydroorotate dehydrogenase family. Type 2 subfamily. As to quaternary structure, monomer. It depends on FMN as a cofactor.

It localises to the cell membrane. It carries out the reaction (S)-dihydroorotate + a quinone = orotate + a quinol. It functions in the pathway pyrimidine metabolism; UMP biosynthesis via de novo pathway; orotate from (S)-dihydroorotate (quinone route): step 1/1. Functionally, catalyzes the conversion of dihydroorotate to orotate with quinone as electron acceptor. This Bartonella tribocorum (strain CIP 105476 / IBS 506) protein is Dihydroorotate dehydrogenase (quinone).